We begin with the raw amino-acid sequence, 552 residues long: Arginine--tRNA ligase (552 aa).

The 'HIGH' region signature appears at 123–133 (ANPTGPLTIGR).

The protein belongs to the class-I aminoacyl-tRNA synthetase family. In terms of assembly, monomer.

The protein localises to the cytoplasm. It carries out the reaction tRNA(Arg) + L-arginine + ATP = L-arginyl-tRNA(Arg) + AMP + diphosphate. This Pelodictyon phaeoclathratiforme (strain DSM 5477 / BU-1) protein is Arginine--tRNA ligase.